Here is a 274-residue protein sequence, read N- to C-terminus: Orotidine 5'-phosphate decarboxylase (274 aa).

Residues 1-15 show a composition bias toward low complexity; it reads MSAGRRSSGGRSAAA. Positions 1–21 are disordered; sequence MSAGRRSSGGRSAAAPRFTPP. Residues aspartate 32, lysine 54, 99-108, threonine 154, arginine 215, glutamine 224, glycine 244, and arginine 245 each bind substrate; that span reads DLKLHDIPAT. The Proton donor role is filled by lysine 101.

This sequence belongs to the OMP decarboxylase family. Type 1 subfamily. In terms of assembly, homodimer.

It catalyses the reaction orotidine 5'-phosphate + H(+) = UMP + CO2. It functions in the pathway pyrimidine metabolism; UMP biosynthesis via de novo pathway; UMP from orotate: step 2/2. Functionally, catalyzes the decarboxylation of orotidine 5'-monophosphate (OMP) to uridine 5'-monophosphate (UMP). This chain is Orotidine 5'-phosphate decarboxylase, found in Frankia casuarinae (strain DSM 45818 / CECT 9043 / HFP020203 / CcI3).